Here is a 283-residue protein sequence, read N- to C-terminus: Protein/nucleic acid deglycase HchA (283 aa).

Residues His-86, Glu-91, and His-123 each coordinate Zn(2+). Cys-185 serves as the catalytic Nucleophile.

This sequence belongs to the peptidase C56 family. HchA subfamily. Homodimer.

The protein localises to the cytoplasm. The enzyme catalyses N(omega)-(1-hydroxy-2-oxopropyl)-L-arginyl-[protein] + H2O = lactate + L-arginyl-[protein] + H(+). It carries out the reaction N(6)-(1-hydroxy-2-oxopropyl)-L-lysyl-[protein] + H2O = lactate + L-lysyl-[protein] + H(+). It catalyses the reaction S-(1-hydroxy-2-oxopropyl)-L-cysteinyl-[protein] + H2O = lactate + L-cysteinyl-[protein] + H(+). The catalysed reaction is N(omega)-(1-hydroxy-2-oxoethyl)-L-arginyl-[protein] + H2O = L-arginyl-[protein] + glycolate + H(+). The enzyme catalyses N(6)-(1-hydroxy-2-oxoethyl)-L-lysyl-[protein] + H2O = glycolate + L-lysyl-[protein] + H(+). It carries out the reaction S-(1-hydroxy-2-oxoethyl)-L-cysteinyl-[protein] + H2O = glycolate + L-cysteinyl-[protein] + H(+). It catalyses the reaction N(2)-(1-hydroxy-2-oxopropyl)-dGTP + H2O = lactate + dGTP + H(+). The catalysed reaction is N(2)-(1-hydroxy-2-oxopropyl)-GTP + H2O = lactate + GTP + H(+). The enzyme catalyses N(2)-(1-hydroxy-2-oxopropyl)-GDP + H2O = lactate + GDP + H(+). It carries out the reaction N(2)-(1-hydroxy-2-oxopropyl)-GMP + H2O = lactate + GMP + H(+). It catalyses the reaction N(2)-(1-hydroxy-2-oxoethyl)-dGTP + H2O = dGTP + glycolate + H(+). The catalysed reaction is N(2)-(1-hydroxy-2-oxoethyl)-GTP + H2O = glycolate + GTP + H(+). The enzyme catalyses N(2)-(1-hydroxy-2-oxoethyl)-GDP + H2O = glycolate + GDP + H(+). It carries out the reaction N(2)-(1-hydroxy-2-oxoethyl)-GMP + H2O = glycolate + GMP + H(+). It catalyses the reaction an N(2)-(1-hydroxy-2-oxopropyl)-guanosine in RNA + H2O = a guanosine in RNA + lactate + H(+). The catalysed reaction is an N(2)-(1-hydroxy-2-oxopropyl)-2'-deoxyguanosine in DNA + H2O = a 2'-deoxyguanosine in DNA + lactate + H(+). The enzyme catalyses an N(2)-(1-hydroxy-2-oxoethyl)-guanosine in RNA + H2O = a guanosine in RNA + glycolate + H(+). It carries out the reaction an N(2)-(1-hydroxy-2-oxoethyl)-2'-deoxyguanosine in DNA + H2O = a 2'-deoxyguanosine in DNA + glycolate + H(+). Functionally, protein and nucleotide deglycase that catalyzes the deglycation of the Maillard adducts formed between amino groups of proteins or nucleotides and reactive carbonyl groups of glyoxals. Thus, functions as a protein deglycase that repairs methylglyoxal- and glyoxal-glycated proteins, and releases repaired proteins and lactate or glycolate, respectively. Deglycates cysteine, arginine and lysine residues in proteins, and thus reactivates these proteins by reversing glycation by glyoxals. Acts on early glycation intermediates (hemithioacetals and aminocarbinols), preventing the formation of Schiff bases and advanced glycation endproducts (AGE). Also functions as a nucleotide deglycase able to repair glycated guanine in the free nucleotide pool (GTP, GDP, GMP, dGTP) and in DNA and RNA. Is thus involved in a major nucleotide repair system named guanine glycation repair (GG repair), dedicated to reversing methylglyoxal and glyoxal damage via nucleotide sanitization and direct nucleic acid repair. Plays an important role in protecting cells from carbonyl stress. The polypeptide is Protein/nucleic acid deglycase HchA (Escherichia coli O7:K1 (strain IAI39 / ExPEC)).